We begin with the raw amino-acid sequence, 77 residues long: Cytoplasmic envelopment protein 3 (77 aa).

Glycine 2 carries the N-myristoyl glycine; by host lipid modification.

This sequence belongs to the herpesviridae cytoplasmic envelopment protein 3 family. Interacts with cytoplasmic envelopment protein 2; this interaction is essential for the proper localization of each protein to the assembly complex and thus for the production of infectious virus. Myristoylation and palmitoylation (probably on one or more of the nearby cysteines at the N-terminus) enable membrane-binding and Golgi apparatus-specific targeting and are essential for efficient packaging. Post-translationally, phosphorylated. Phosphorylation does not seem to be required for recycling to the host Golgi apparatus. Packaging is selective for underphosphorylated forms.

The protein resides in the virion tegument. It is found in the virion membrane. Its subcellular location is the host cell membrane. The protein localises to the host Golgi apparatus membrane. Plays an important role in the cytoplasmic envelopment of tegument proteins and capsids during the assembly and egress processes. Also participates in viral entry at the fusion step probably by regulating the core fusion machinery. This Human herpesvirus 6A (strain Uganda-1102) (HHV-6 variant A) protein is Cytoplasmic envelopment protein 3 (U71).